Reading from the N-terminus, the 161-residue chain is Putative pre-16S rRNA nuclease (161 aa).

Belongs to the YqgF nuclease family.

The protein resides in the cytoplasm. Its function is as follows. Could be a nuclease involved in processing of the 5'-end of pre-16S rRNA. The chain is Putative pre-16S rRNA nuclease from Methylocella silvestris (strain DSM 15510 / CIP 108128 / LMG 27833 / NCIMB 13906 / BL2).